We begin with the raw amino-acid sequence, 696 residues long: MNKIRKTFQYGKHEVTFETGEMARQATGAVVVRMGDTVLLVSVVAKKEAEEGRDFFPLTINYQEKTYAAGKIPGGYFKREGRPTEKETLTSRLIDRPLRPLFPKGFTNEVQVIATVLSVDSKVPTDIPAILGASAAIGLSGIPFNGSLGAARVGYRGGEYLLNPSLDELKDSALDLVVAGTRDAVLMVESEAQELPESVMLGAVLHGHQAMQVAIQAIAEFIQEAGGAKWEWEPPTVNTALEKWVVEKSEAPLKKAYQIQEKTARQAQIQAIRDQLLADRAAEREGEENAVNEHELAVIFHELERRIVREQILTGQPRIDGRDSKTVRPITVKVGVLPRSHGSALFTRGETQALVVTTLGTERDAQSIDDLDGDRQEEFIFHYNFPPFCVGEVGFMSGPKRREIGHGRLAKRAVVPVVPTLDKFPYVIRVVSEILESNGSSSMASVCGSSLALMDAGVPTKAPVAGIAMGLIKENDKYAVLSDILGDEDHLGDMDFKVAGTSNGVTALQMDIKIEGITKEIMEQALDQAKEGRLHILSIMNKVLDKPRSQVSDLAPQYVTMKINPEKIRDVIGKGGVVIREITEATNCAIDISDDGTIKIAAHTTEEGEAAKRRIEELTAEVELGKVYEGTVVKITDFGAFVQILPNTQGLVHISQIAQERVENVRDYLEEGQVIRVKVIEIDRQGRVRLSMKQID.

2 residues coordinate Mg(2+): aspartate 489 and aspartate 495. The KH domain occupies 556–615 (PQYVTMKINPEKIRDVIGKGGVVIREITEATNCAIDISDDGTIKIAAHTTEEGEAAKRRI). The 69-residue stretch at 625 to 693 (GKVYEGTVVK…RQGRVRLSMK (69 aa)) folds into the S1 motif domain.

The protein belongs to the polyribonucleotide nucleotidyltransferase family. In terms of assembly, component of the RNA degradosome, which is a multiprotein complex involved in RNA processing and mRNA degradation. The cofactor is Mg(2+).

It localises to the cytoplasm. It carries out the reaction RNA(n+1) + phosphate = RNA(n) + a ribonucleoside 5'-diphosphate. Functionally, involved in mRNA degradation. Catalyzes the phosphorolysis of single-stranded polyribonucleotides processively in the 3'- to 5'-direction. The sequence is that of Polyribonucleotide nucleotidyltransferase from Coxiella burnetii (strain CbuG_Q212) (Coxiella burnetii (strain Q212)).